The sequence spans 105 residues: MIVTTTNNVEGHTIGQYLRIVSGETVAGINMFKDIGAGFRNITGGRSSAYEGEILQARETALKEMVDRALEMGAHGIVGVDVDYESLGQGGMVMVSATGTAVTFQ.

Belongs to the UPF0145 family.

This chain is UPF0145 protein jk0060, found in Corynebacterium jeikeium (strain K411).